Here is a 92-residue protein sequence, read N- to C-terminus: UPF0358 protein Exig_1994 (92 aa).

The protein belongs to the UPF0358 family.

The chain is UPF0358 protein Exig_1994 from Exiguobacterium sibiricum (strain DSM 17290 / CCUG 55495 / CIP 109462 / JCM 13490 / 255-15).